The following is a 154-amino-acid chain: Decarboxylase claH (154 aa).

The protein belongs to the tpcK family.

It carries out the reaction atrochrysone carboxylate + H(+) = atrochrysone + CO2. Its pathway is pigment biosynthesis. In terms of biological role, decarboxylase involved in the biosynthesis of the bianthraquinone cladofulvin, a conidial pigment not required for virulence but that plays a role in fitness and resistance to environmental stresses including UV light and low-temperature stress. The pathway begins with the synthesis of atrochrysone thioester by the polyketide synthase (PKS) claG. The atrochrysone carboxyl ACP thioesterase claF then breaks the thioester bond and releases the atrochrysone carboxylic acid from claG. This compound is decarboxylated by claH to yield emodin, which is further converted to chrysophanol hydroquinone by the reductase claC and the dehydratase claB. The cytochrome monooxygenase P450 claM then catalyzes the dimerization of nataloe-emodin to cladofulvin. The protein is Decarboxylase claH of Passalora fulva (Tomato leaf mold).